A 384-amino-acid polypeptide reads, in one-letter code: Cobalt-precorrin-5B C(1)-methyltransferase (384 aa).

It belongs to the CbiD family.

It catalyses the reaction Co-precorrin-5B + S-adenosyl-L-methionine = Co-precorrin-6A + S-adenosyl-L-homocysteine. The protein operates within cofactor biosynthesis; adenosylcobalamin biosynthesis; cob(II)yrinate a,c-diamide from sirohydrochlorin (anaerobic route): step 6/10. Catalyzes the methylation of C-1 in cobalt-precorrin-5B to form cobalt-precorrin-6A. This chain is Cobalt-precorrin-5B C(1)-methyltransferase, found in Ruminiclostridium cellulolyticum (strain ATCC 35319 / DSM 5812 / JCM 6584 / H10) (Clostridium cellulolyticum).